The chain runs to 328 residues: uncharacterized protein (328 aa).

A signal peptide spans 1–24 (MKSIKGLGKLLLASSILFSSSAFA).

Belongs to the bacterial solute-binding protein 7 family.

The protein resides in the periplasm. This is an uncharacterized protein from Haemophilus influenzae (strain ATCC 51907 / DSM 11121 / KW20 / Rd).